A 1542-amino-acid polypeptide reads, in one-letter code: Pleiotropic ABC efflux transporter of multiple drugs PDH1 (1542 aa).

Low complexity predominate over residues methionine 1–serine 14. Residues methionine 1 to aspartate 61 are disordered. Topologically, residues methionine 1–asparagine 517 are cytoplasmic. Residues asparagine 24 to alanine 33 show a composition bias toward basic and acidic residues. Positions serine 35–serine 47 are enriched in polar residues. The ABC transporter 1 domain occupies valine 153–lysine 409. Transmembrane regions (helical) follow at residues serine 518–phenylalanine 540, phenylalanine 552–isoleucine 574, valine 603–valine 625, phenylalanine 634–phenylalanine 652, leucine 662–isoleucine 684, and glycine 773–cysteine 792. The Cytoplasmic segment spans residues glutamate 793–aspartate 1220. Basic and acidic residues predominate over residues threonine 825 to isoleucine 834. The disordered stretch occupies residues threonine 825 to threonine 846. Residues glutamate 835–threonine 846 show a composition bias toward polar residues. The 244-residue stretch at phenylalanine 885–alanine 1128 folds into the ABC transporter 2 domain. Glycine 921 to threonine 928 lines the ATP pocket. A run of 6 helical transmembrane segments spans residues tyrosine 1221–phenylalanine 1241, serine 1256–valine 1276, alanine 1296–alanine 1316, leucine 1342–isoleucine 1362, threonine 1370–alanine 1390, and glycine 1495–alanine 1515. Over arginine 1516–phenylalanine 1542 the chain is Cytoplasmic.

The protein belongs to the ABC transporter superfamily. ABCG family. PDR (TC 3.A.1.205) subfamily. In terms of processing, phosphorylated by PKA. Dephosphorylated on glucose depletion and independently rephosphorylated during glucose exposure or under stress.

It is found in the cell membrane. Pleiotropic ABC efflux transporter that confers resistance to structurally and functionally unrelated compounds including caspofungin or azoles such as fluconazole, itraconazole, posaconazole, voriconazole, and isavuconazole. Does not play a role in the azole resistance in mature biofilms. The sequence is that of Pleiotropic ABC efflux transporter of multiple drugs PDH1 from Candida glabrata (strain ATCC 2001 / BCRC 20586 / JCM 3761 / NBRC 0622 / NRRL Y-65 / CBS 138) (Yeast).